Reading from the N-terminus, the 61-residue chain is Large ribosomal subunit protein bL32 (61 aa).

A compositionally biased stretch (basic residues) spans 1–16 (MAVPKRKTSPSKRGMR). The segment at 1-61 (MAVPKRKTSP…RSVLTPKNSG (61 aa)) is disordered. Over residues 28–44 (VEDKDSGELRRPHHIDL) the composition is skewed to basic and acidic residues.

This sequence belongs to the bacterial ribosomal protein bL32 family.

The protein is Large ribosomal subunit protein bL32 of Bartonella bacilliformis (strain ATCC 35685 / KC583 / Herrer 020/F12,63).